The chain runs to 339 residues: Anthranilate phosphoribosyltransferase (339 aa).

Residues Gly-79, 82–83 (GD), Ser-87, 89–92 (NIST), 107–115 (KHGNRAASS), and Ala-119 each bind 5-phospho-alpha-D-ribose 1-diphosphate. Gly-79 is a binding site for anthranilate. Position 91 (Ser-91) interacts with Mg(2+). Anthranilate is bound at residue Asn-110. Arg-165 contacts anthranilate. 2 residues coordinate Mg(2+): Asp-224 and Glu-225.

Belongs to the anthranilate phosphoribosyltransferase family. In terms of assembly, homodimer. The cofactor is Mg(2+).

The catalysed reaction is N-(5-phospho-beta-D-ribosyl)anthranilate + diphosphate = 5-phospho-alpha-D-ribose 1-diphosphate + anthranilate. Its pathway is amino-acid biosynthesis; L-tryptophan biosynthesis; L-tryptophan from chorismate: step 2/5. Functionally, catalyzes the transfer of the phosphoribosyl group of 5-phosphorylribose-1-pyrophosphate (PRPP) to anthranilate to yield N-(5'-phosphoribosyl)-anthranilate (PRA). The protein is Anthranilate phosphoribosyltransferase of Lactiplantibacillus plantarum (strain ATCC BAA-793 / NCIMB 8826 / WCFS1) (Lactobacillus plantarum).